A 98-amino-acid chain; its full sequence is NADH-ubiquinone oxidoreductase chain 4L (98 aa).

3 consecutive transmembrane segments (helical) span residues 1-21, 26-46, and 56-76; these read MSPL…GLAF, LISA…PLSI, and FALV…TGLA.

It belongs to the complex I subunit 4L family. As to quaternary structure, core subunit of respiratory chain NADH dehydrogenase (Complex I) which is composed of 45 different subunits.

Its subcellular location is the mitochondrion inner membrane. The catalysed reaction is a ubiquinone + NADH + 5 H(+)(in) = a ubiquinol + NAD(+) + 4 H(+)(out). Functionally, core subunit of the mitochondrial membrane respiratory chain NADH dehydrogenase (Complex I) which catalyzes electron transfer from NADH through the respiratory chain, using ubiquinone as an electron acceptor. Part of the enzyme membrane arm which is embedded in the lipid bilayer and involved in proton translocation. This chain is NADH-ubiquinone oxidoreductase chain 4L (MT-ND4L), found in Gallus gallus (Chicken).